A 341-amino-acid chain; its full sequence is Elongation factor Ts, mitochondrial 2 (341 aa).

A mitochondrion-targeting transit peptide spans 1–17; sequence MLAARFASRAFPRTRLY.

It belongs to the EF-Ts family.

The protein resides in the mitochondrion. Associates with the EF-Tu.GDP complex and induces the exchange of GDP to GTP. It remains bound to the aminoacyl-tRNA.EF-Tu.GTP complex up to the GTP hydrolysis stage on the ribosome. This chain is Elongation factor Ts, mitochondrial 2, found in Postia placenta (strain ATCC 44394 / Madison 698-R) (Brown rot fungus).